Reading from the N-terminus, the 801-residue chain is Protein 4.1 (801 aa).

The segment at 1-187 is disordered; sequence MTTEKGLLAE…GESKASHKVV (187 aa). Low complexity predominate over residues 45 to 58; sequence EQSQESPSTTSPST. A compositionally biased stretch (basic and acidic residues) spans 88–107; the sequence is SDEKEVELLGEKGQDQKDVD. Residues 108 to 117 show a composition bias toward acidic residues; that stretch reads EGLGEQLEDD. The span at 141 to 151 shows a compositional bias: polar residues; sequence SLSSAETQPAQ. The span at 154–166 shows a compositional bias: acidic residues; the sequence is QKEDQDPEADCED. A compositionally biased stretch (basic and acidic residues) spans 167–182; that stretch reads VEGKEPIKKPEGESKA. The FERM domain maps to 193–474; it reads MRCKVTLLDD…EHHTFFRLTS (282 aa). A hydrophilic region spans residues 477 to 587; it reads SIPKHRFLSL…GMPNQRESPK (111 aa). The segment at 516 to 613 is disordered; the sequence is RTGSKRASRS…DKVKDLEKTQ (98 aa). The segment covering 563–577 has biased composition (basic and acidic residues); that stretch reads RVEEMPKKTEEKPKE. The spectrin--actin-binding stretch occupies residues 588-651; the sequence is DVKATQQDSP…WDKRLSTHSP (64 aa). A compositionally biased stretch (polar residues) spans 591 to 601; that stretch reads ATQQDSPSPTV. Over residues 604–613 the composition is skewed to basic and acidic residues; it reads DKVKDLEKTQ. Positions 653–801 are C-terminal (CTD); that stretch reads RTLSFNGQVQ…GVVHQETEIA (149 aa).

As to quaternary structure, binds with a high affinity to glycophorin and with lower affinity to band III protein. Associates with the nuclear mitotic apparatus. Binds calmodulin. Post-translationally, phosphorylated at multiple sites by different protein kinases and each phosphorylation event selectively modulates the protein's functions. As to expression, found exclusively in photoreceptors following the terminal mitosis of retinal neurons. When retinal synaptogenesis is complete, protein 4.1 is also expressed in the inner retina. In adult amphibian retinas, protein 4.1 is detected in photoreceptors, bipolar cells, and ganglion cell axons.

It is found in the nucleus. Its subcellular location is the cytoplasm. It localises to the cytoskeleton. The protein resides in the cell cortex. Protein 4.1 is a major structural element of the erythrocyte membrane skeleton. It plays a key role in regulating membrane physical properties of mechanical stability and deformability by stabilizing spectrin-actin interaction. May be required for dynein-dynactin complex and NUMA1 recruitment at the mitotic cell cortex during anaphase. The polypeptide is Protein 4.1 (Xenopus laevis (African clawed frog)).